The chain runs to 342 residues: Holliday junction branch migration complex subunit RuvB (342 aa).

Positions 1-185 are large ATPase domain (RuvB-L); the sequence is MREDYLKSDD…FGINARLEYY (185 aa). ATP contacts are provided by residues L24, R25, G66, K69, T70, T71, 132–134, R175, Y185, and R222; that span reads EDY. T70 lines the Mg(2+) pocket. The segment at 186–256 is small ATPAse domain (RuvB-S); that stretch reads DAKLLTRIVQ…IARIALQALN (71 aa). Positions 259–342 are head domain (RuvB-H); sequence HNGLDDMDNR…PPAQSGTLFE (84 aa). R314 and R319 together coordinate DNA.

It belongs to the RuvB family. As to quaternary structure, homohexamer. Forms an RuvA(8)-RuvB(12)-Holliday junction (HJ) complex. HJ DNA is sandwiched between 2 RuvA tetramers; dsDNA enters through RuvA and exits via RuvB. An RuvB hexamer assembles on each DNA strand where it exits the tetramer. Each RuvB hexamer is contacted by two RuvA subunits (via domain III) on 2 adjacent RuvB subunits; this complex drives branch migration. In the full resolvosome a probable DNA-RuvA(4)-RuvB(12)-RuvC(2) complex forms which resolves the HJ.

The protein resides in the cytoplasm. It catalyses the reaction ATP + H2O = ADP + phosphate + H(+). Functionally, the RuvA-RuvB-RuvC complex processes Holliday junction (HJ) DNA during genetic recombination and DNA repair, while the RuvA-RuvB complex plays an important role in the rescue of blocked DNA replication forks via replication fork reversal (RFR). RuvA specifically binds to HJ cruciform DNA, conferring on it an open structure. The RuvB hexamer acts as an ATP-dependent pump, pulling dsDNA into and through the RuvAB complex. RuvB forms 2 homohexamers on either side of HJ DNA bound by 1 or 2 RuvA tetramers; 4 subunits per hexamer contact DNA at a time. Coordinated motions by a converter formed by DNA-disengaged RuvB subunits stimulates ATP hydrolysis and nucleotide exchange. Immobilization of the converter enables RuvB to convert the ATP-contained energy into a lever motion, pulling 2 nucleotides of DNA out of the RuvA tetramer per ATP hydrolyzed, thus driving DNA branch migration. The RuvB motors rotate together with the DNA substrate, which together with the progressing nucleotide cycle form the mechanistic basis for DNA recombination by continuous HJ branch migration. Branch migration allows RuvC to scan DNA until it finds its consensus sequence, where it cleaves and resolves cruciform DNA. The polypeptide is Holliday junction branch migration complex subunit RuvB (Cytophaga hutchinsonii (strain ATCC 33406 / DSM 1761 / CIP 103989 / NBRC 15051 / NCIMB 9469 / D465)).